The following is a 608-amino-acid chain: 65-kDa microtubule-associated protein 6 (608 aa).

Coiled coils occupy residues 164-186 (DLTLRNLNEYQTHLRTLQKEKSD), 368-388 (ELLANIEMQINKIKDEAQSRK), and 467-503 (VRLVNILEDYKLTRKQQEEEKKRYRDQKKRQDLLLTQ). The interval 501–565 (LTQRESIYGS…RSYSGHHRQN (65 aa)) is disordered. The segment covering 510–523 (SKPSPRRSSSFRKP) has biased composition (low complexity). Residue S513 is modified to Phosphoserine. Residues 526 to 535 (FNISNGNGSV) show a composition bias toward polar residues. S604 is modified (phosphoserine).

The protein belongs to the MAP65/ASE1 family. As to quaternary structure, forms a dimer. Binds to polymerized centrally located endocytic MT.

The protein resides in the nucleus. It localises to the cytoplasm. Its subcellular location is the mitochondrion. It is found in the cytoskeleton. The protein localises to the phragmoplast. In terms of biological role, microtubule-associated protein that mediates the formation of a mesh-like stable and dense network formed by individual microtubules (MT). Confers MT resistance to high concentration of NaCl. In Arabidopsis thaliana (Mouse-ear cress), this protein is 65-kDa microtubule-associated protein 6 (MAP65-6).